The following is a 38-amino-acid chain: Photosystem II reaction center protein L (38 aa).

Residues 17–37 (SLYWGLLLIFVLAVLFSSYFF) form a helical membrane-spanning segment.

Belongs to the PsbL family. In terms of assembly, PSII is composed of 1 copy each of membrane proteins PsbA, PsbB, PsbC, PsbD, PsbE, PsbF, PsbH, PsbI, PsbJ, PsbK, PsbL, PsbM, PsbT, PsbX, PsbY, PsbZ, Psb30/Ycf12, at least 3 peripheral proteins of the oxygen-evolving complex and a large number of cofactors. It forms dimeric complexes.

It localises to the plastid. The protein resides in the chloroplast thylakoid membrane. Its function is as follows. One of the components of the core complex of photosystem II (PSII). PSII is a light-driven water:plastoquinone oxidoreductase that uses light energy to abstract electrons from H(2)O, generating O(2) and a proton gradient subsequently used for ATP formation. It consists of a core antenna complex that captures photons, and an electron transfer chain that converts photonic excitation into a charge separation. This subunit is found at the monomer-monomer interface and is required for correct PSII assembly and/or dimerization. The chain is Photosystem II reaction center protein L from Ephedra sinica (Chinese ephedra).